Reading from the N-terminus, the 242-residue chain is Probable transcriptional regulatory protein XCC3027 (242 aa).

The protein belongs to the TACO1 family.

It localises to the cytoplasm. The sequence is that of Probable transcriptional regulatory protein XCC3027 from Xanthomonas campestris pv. campestris (strain ATCC 33913 / DSM 3586 / NCPPB 528 / LMG 568 / P 25).